The chain runs to 349 residues: Probable ethanolamine kinase A (349 aa).

Belongs to the choline/ethanolamine kinase family.

It is found in the cytoplasm. It carries out the reaction ethanolamine + ATP = phosphoethanolamine + ADP + H(+). Its pathway is phospholipid metabolism; phosphatidylethanolamine biosynthesis; phosphatidylethanolamine from ethanolamine: step 1/3. In terms of biological role, highly specific for ethanolamine phosphorylation. May be a rate-controlling step in phosphatidylethanolamine biosynthesis. The polypeptide is Probable ethanolamine kinase A (etnkA) (Dictyostelium discoideum (Social amoeba)).